Here is a 155-residue protein sequence, read N- to C-terminus: Small ribosomal subunit protein uS7 (155 aa).

The protein belongs to the universal ribosomal protein uS7 family. Part of the 30S ribosomal subunit. Contacts proteins S9 and S11.

Its function is as follows. One of the primary rRNA binding proteins, it binds directly to 16S rRNA where it nucleates assembly of the head domain of the 30S subunit. Is located at the subunit interface close to the decoding center, probably blocks exit of the E-site tRNA. The protein is Small ribosomal subunit protein uS7 of Helicobacter hepaticus (strain ATCC 51449 / 3B1).